The following is a 216-amino-acid chain: MRAAAVKFRTCRSTTRVPRIMTARMSDDPLALFDSWFAEARASEPNDSNAMALATATPDGRPSLRMVLLKGHGPDGFVFYTNLDSRKGGELAANPHVALLFHWKSLRRQIRIEGSVAPVDNATADAYFATRSRDSQIGAWASDQSRPLDSRATFEARFAEMQARFAGQDVPRPPRWSGWRVTPERIEFWQDRAHRLHERTLFERTAIGWTKGYLYP.

Residues 65-70 (RMVLLK), 80-81 (YT), Arg86, Lys87, and Gln109 contribute to the FMN site. Lys70 lines the substrate pocket. Substrate contacts are provided by Tyr127, Arg131, and Ser135. FMN-binding positions include 144-145 (QS) and Trp189. 195–197 (RLH) contacts substrate. Arg199 provides a ligand contact to FMN.

This sequence belongs to the pyridoxamine 5'-phosphate oxidase family. Homodimer. The cofactor is FMN.

The enzyme catalyses pyridoxamine 5'-phosphate + O2 + H2O = pyridoxal 5'-phosphate + H2O2 + NH4(+). It catalyses the reaction pyridoxine 5'-phosphate + O2 = pyridoxal 5'-phosphate + H2O2. The protein operates within cofactor metabolism; pyridoxal 5'-phosphate salvage; pyridoxal 5'-phosphate from pyridoxamine 5'-phosphate: step 1/1. Its pathway is cofactor metabolism; pyridoxal 5'-phosphate salvage; pyridoxal 5'-phosphate from pyridoxine 5'-phosphate: step 1/1. Functionally, catalyzes the oxidation of either pyridoxine 5'-phosphate (PNP) or pyridoxamine 5'-phosphate (PMP) into pyridoxal 5'-phosphate (PLP). The chain is Pyridoxine/pyridoxamine 5'-phosphate oxidase from Sphingopyxis alaskensis (strain DSM 13593 / LMG 18877 / RB2256) (Sphingomonas alaskensis).